Here is a 640-residue protein sequence, read N- to C-terminus: Chaperone protein DnaK (640 aa).

The residue at position 196 (Thr-196) is a Phosphothreonine; by autocatalysis. Disordered regions lie at residues 510-530 (NDAK…ETKN) and 598-640 (AADA…DKDK).

It belongs to the heat shock protein 70 family.

Functionally, acts as a chaperone. This chain is Chaperone protein DnaK, found in Prosthecochloris aestuarii (strain DSM 271 / SK 413).